Here is a 301-residue protein sequence, read N- to C-terminus: Oxygen-dependent coproporphyrinogen-III oxidase (301 aa).

Residues 49–58 (VMVDGAVIEK) form an important for dimerization region. Serine 93 contacts substrate. The active-site Proton donor is the histidine 107. Residues 109–111 (NVR) and 259–261 (GGR) contribute to the substrate site. The tract at residues 241–276 (YAEFNLVIDRGTKFGLQSGGRTESILISLPPRARWG) is important for dimerization.

This sequence belongs to the aerobic coproporphyrinogen-III oxidase family. Homodimer.

It is found in the cytoplasm. It catalyses the reaction coproporphyrinogen III + O2 + 2 H(+) = protoporphyrinogen IX + 2 CO2 + 2 H2O. Its pathway is porphyrin-containing compound metabolism; protoporphyrin-IX biosynthesis; protoporphyrinogen-IX from coproporphyrinogen-III (O2 route): step 1/1. Functionally, involved in the heme biosynthesis. Catalyzes the aerobic oxidative decarboxylation of propionate groups of rings A and B of coproporphyrinogen-III to yield the vinyl groups in protoporphyrinogen-IX. The chain is Oxygen-dependent coproporphyrinogen-III oxidase from Leishmania major.